The following is a 313-amino-acid chain: Olfactory receptor 4M1 (313 aa).

Residues 1-25 (MEPANDTTVTEFILTGLSQTREVQL) are Extracellular-facing. Residue N5 is glycosylated (N-linked (GlcNAc...) asparagine). A helical membrane pass occupies residues 26–46 (VLFVIFLSFYLFILPVNILII). The Cytoplasmic segment spans residues 47–57 (CTIRLDSHLSS). The helical transmembrane segment at 58 to 78 (PMYFLLANLAFLDIWYSSITA) threads the bilayer. At 79-97 (PKMLVDFFVERKIISFGGC) the chain is on the extracellular side. C97 and C179 are disulfide-bonded. Residues 98–118 (IAQLFFLHFVGASEMFLLTVM) form a helical membrane-spanning segment. Residues 119 to 142 (AFDRYAAICRPLHYATIMNRRLCC) are Cytoplasmic-facing. Residues 143-163 (ILVALSWTGGFVHSIIQVALI) traverse the membrane as a helical segment. At 164–204 (VRLPFCGPNELDNYFCDITQVVRIACANTFLEEMVMIFSSG) the chain is on the extracellular side. The chain crosses the membrane as a helical span at residues 205–225 (LISVVCFIALLMSYAFLLTML). At 226–238 (KKHSSSGESTSRA) the chain is on the cytoplasmic side. The chain crosses the membrane as a helical span at residues 239–259 (ISTCYSHITIVVLMFGPSIYI). Topologically, residues 260–270 (YARPFDSFSLD) are extracellular. A helical transmembrane segment spans residues 271–291 (KVVSVFHTVIFPLLNPIIYTL). Topologically, residues 292–313 (RNKEVKAAMRKLVNRYIFCKEK) are cytoplasmic.

It belongs to the G-protein coupled receptor 1 family. In terms of tissue distribution, highly expressed in liver but not in adipose tissue. Also expressed at high level in testis.

It is found in the cell membrane. In terms of biological role, olfactory receptor that acts as a receptor of Asprosin hormone at the surface of hepatocytes to promote hepatocyte glucose release. Also binds Asprosin in the arcuate nucleus of the hypothalamus, thereby stimulating appetite by promoting orexigenic AgRP neuronal activity. In testis, Asprosin-binding promotes sperm progressive motility and enhances male fertility. The activity of this receptor is mediated by G proteins which activate adenylyl cyclase, resulting in an elevation of intracellular cAMP. The chain is Olfactory receptor 4M1 from Mus musculus (Mouse).